The following is a 124-amino-acid chain: Large ribosomal subunit protein bL19 (124 aa).

It belongs to the bacterial ribosomal protein bL19 family.

Functionally, this protein is located at the 30S-50S ribosomal subunit interface and may play a role in the structure and function of the aminoacyl-tRNA binding site. This Acidiphilium cryptum (strain JF-5) protein is Large ribosomal subunit protein bL19.